Reading from the N-terminus, the 429-residue chain is UDP-N-acetylglucosamine 1-carboxyvinyltransferase (429 aa).

Residue 22-23 (KN) participates in phosphoenolpyruvate binding. Position 102 (R102) interacts with UDP-N-acetyl-alpha-D-glucosamine. C126 acts as the Proton donor in catalysis. C126 bears the 2-(S-cysteinyl)pyruvic acid O-phosphothioketal mark. Residues 171 to 174 (KVSV), D316, and I338 each bind UDP-N-acetyl-alpha-D-glucosamine.

It belongs to the EPSP synthase family. MurA subfamily.

The protein resides in the cytoplasm. It catalyses the reaction phosphoenolpyruvate + UDP-N-acetyl-alpha-D-glucosamine = UDP-N-acetyl-3-O-(1-carboxyvinyl)-alpha-D-glucosamine + phosphate. Its pathway is cell wall biogenesis; peptidoglycan biosynthesis. Functionally, cell wall formation. Adds enolpyruvyl to UDP-N-acetylglucosamine. The protein is UDP-N-acetylglucosamine 1-carboxyvinyltransferase of Azorhizobium caulinodans (strain ATCC 43989 / DSM 5975 / JCM 20966 / LMG 6465 / NBRC 14845 / NCIMB 13405 / ORS 571).